The sequence spans 75 residues: Accessory gland-specific peptide 57Da (75 aa).

Residues 1–19 form the signal peptide; the sequence is MKFLALFVTLLVVLALVSA. Residues 55 to 75 are disordered; it reads AAPAAAPAAPEAGLADAPAES. The segment covering 56–75 has biased composition (low complexity); sequence APAAAPAAPEAGLADAPAES.

As to expression, lumen fluid of male accessory glands, becomes seminal fluid.

It is found in the secreted. Functionally, transferred from male to female during mating and may affect egglaying and behavior after mating. The polypeptide is Accessory gland-specific peptide 57Da (Mst57Da) (Drosophila melanogaster (Fruit fly)).